Consider the following 211-residue polypeptide: HTH-type transcriptional regulator AlkX (211 aa).

The HTH tetR-type domain occupies 22-82 (ALLRDSVLDA…GYALRLADRL (61 aa)). Positions 45–64 (TLSDVARAAGISRQTIYNEF) form a DNA-binding region, H-T-H motif.

As to quaternary structure, homodimer.

The protein localises to the cytoplasm. Its activity is regulated as follows. DNA-binding activity may be regulated by fatty acids. In terms of biological role, represses the expression of the alkB-rubAB operon, which encodes the alkane hydroxylase AlkB and the rubredoxins RubA and RubB. Acts by binding to the promoter region of the operon. In addition, EMSA analysis show that AlkX can bind to the promoter region of mmpS1 and mmpL3 and to the intragenic region of mmpL11, suggesting that it may participate in the regulatory network that controls the expression of MmpL lipid transporters. In Mycobacterium tuberculosis (strain ATCC 25618 / H37Rv), this protein is HTH-type transcriptional regulator AlkX.